We begin with the raw amino-acid sequence, 498 residues long: Cysteine--tRNA ligase (498 aa).

Cys44 contributes to the Zn(2+) binding site. Residues 46 to 56 (PTVYSDAHLGH) carry the 'HIGH' region motif. Zn(2+) is bound by residues Cys235, His260, and Glu264. A 'KMSKS' region motif is present at residues 291 to 295 (KMSKS). Lys294 contributes to the ATP binding site.

The protein belongs to the class-I aminoacyl-tRNA synthetase family. Monomer. Zn(2+) serves as cofactor.

The protein resides in the cytoplasm. It catalyses the reaction tRNA(Cys) + L-cysteine + ATP = L-cysteinyl-tRNA(Cys) + AMP + diphosphate. The protein is Cysteine--tRNA ligase (cysS) of Deinococcus radiodurans (strain ATCC 13939 / DSM 20539 / JCM 16871 / CCUG 27074 / LMG 4051 / NBRC 15346 / NCIMB 9279 / VKM B-1422 / R1).